Reading from the N-terminus, the 77-residue chain is Translation initiation factor IF-1, chloroplastic (77 aa).

The S1-like domain maps to 1-71 (MKEQKLIHEG…TRGRIIYRLR (71 aa)).

Belongs to the IF-1 family. Component of the 30S ribosomal translation pre-initiation complex which assembles on the 30S ribosome in the order IF-2 and IF-3, IF-1 and N-formylmethionyl-tRNA(fMet); mRNA recruitment can occur at any time during PIC assembly.

Its subcellular location is the plastid. It localises to the chloroplast. One of the essential components for the initiation of protein synthesis. Stabilizes the binding of IF-2 and IF-3 on the 30S subunit to which N-formylmethionyl-tRNA(fMet) subsequently binds. Helps modulate mRNA selection, yielding the 30S pre-initiation complex (PIC). Upon addition of the 50S ribosomal subunit IF-1, IF-2 and IF-3 are released leaving the mature 70S translation initiation complex. The polypeptide is Translation initiation factor IF-1, chloroplastic (Acorus calamus var. americanus (American sweet flag)).